Consider the following 96-residue polypeptide: Ribonuclease P protein component 1 (96 aa).

The protein belongs to the eukaryotic/archaeal RNase P protein component 1 family. Consists of a catalytic RNA component and at least 5 protein subunits.

It is found in the cytoplasm. It carries out the reaction Endonucleolytic cleavage of RNA, removing 5'-extranucleotides from tRNA precursor.. Functionally, part of ribonuclease P, a protein complex that generates mature tRNA molecules by cleaving their 5'-ends. In Methanococcus maripaludis (strain DSM 14266 / JCM 13030 / NBRC 101832 / S2 / LL), this protein is Ribonuclease P protein component 1.